The primary structure comprises 155 residues: Xanthine-guanine phosphoribosyltransferase 2 (155 aa).

Residues 37-38 (RG) and 91-99 (DDLVDTGNT) contribute to the 5-phospho-alpha-D-ribose 1-diphosphate site. A Mg(2+)-binding site is contributed by Asp-92. Asp-95 and Ile-138 together coordinate guanine. Positions 95 and 138 each coordinate xanthine. GMP contacts are provided by residues 95-99 (DTGNT) and 137-138 (WI).

It belongs to the purine/pyrimidine phosphoribosyltransferase family. XGPT subfamily. Homotetramer. The cofactor is Mg(2+).

The protein localises to the cell inner membrane. It carries out the reaction GMP + diphosphate = guanine + 5-phospho-alpha-D-ribose 1-diphosphate. The catalysed reaction is XMP + diphosphate = xanthine + 5-phospho-alpha-D-ribose 1-diphosphate. It catalyses the reaction IMP + diphosphate = hypoxanthine + 5-phospho-alpha-D-ribose 1-diphosphate. The protein operates within purine metabolism; GMP biosynthesis via salvage pathway; GMP from guanine: step 1/1. Its pathway is purine metabolism; XMP biosynthesis via salvage pathway; XMP from xanthine: step 1/1. Functionally, purine salvage pathway enzyme that catalyzes the transfer of the ribosyl-5-phosphate group from 5-phospho-alpha-D-ribose 1-diphosphate (PRPP) to the N9 position of the 6-oxopurines guanine and xanthine to form the corresponding ribonucleotides GMP (guanosine 5'-monophosphate) and XMP (xanthosine 5'-monophosphate), with the release of PPi. To a lesser extent, also acts on hypoxanthine. The protein is Xanthine-guanine phosphoribosyltransferase 2 of Haemophilus influenzae (strain 86-028NP).